Here is a 263-residue protein sequence, read N- to C-terminus: Phosphoinositide-3-kinase-interacting protein 1 (263 aa).

The signal sequence occupies residues 1-21 (MLLAWVQAFLVSNMLLAEAYG). The Extracellular portion of the chain corresponds to 22 to 168 (SGGCFWDNGH…NSKEKKDLGT (147 aa)). The region spanning 24–101 (GCFWDNGHLY…EKRPCEDLRC (78 aa)) is the Kringle domain. Intrachain disulfides connect Cys25–Cys101, Cys46–Cys82, and Cys70–Cys96. O-linked (GalNAc...) serine glycosylation occurs at Ser39. The N-linked (GlcNAc...) (complex) asparagine glycan is linked to Asn66. Residues 169–189 (LGYVLGITMMVIIIAIGAGII) form a helical membrane-spanning segment. Residues 190 to 263 (LGYSYKRGKD…LMGQAGTPGA (74 aa)) lie on the Cytoplasmic side of the membrane. Residues 242 to 251 (QTPVDPQEGT) show a composition bias toward polar residues. Residues 242–263 (QTPVDPQEGTTPLMGQAGTPGA) form a disordered region.

Post-translationally, N- and O-glycosylated. O-glycosylated with core 1 or possibly core 8 glycans. N-glycan heterogeneity at Asn-66: dHex1Hex5HexNAc4 (major) and dHex1Hex6HexNAc5 (minor).

Its subcellular location is the cell membrane. In terms of biological role, negative regulator of hepatic phosphatidylinositol 3-kinase (PI3K) activity. This chain is Phosphoinositide-3-kinase-interacting protein 1 (PIK3IP1), found in Homo sapiens (Human).